A 251-amino-acid polypeptide reads, in one-letter code: Hydroxyacylglutathione hydrolase (251 aa).

Zn(2+)-binding residues include His53, His55, Asp57, His58, His109, Asp126, and His164.

This sequence belongs to the metallo-beta-lactamase superfamily. Glyoxalase II family. Monomer. It depends on Zn(2+) as a cofactor.

The enzyme catalyses an S-(2-hydroxyacyl)glutathione + H2O = a 2-hydroxy carboxylate + glutathione + H(+). It participates in secondary metabolite metabolism; methylglyoxal degradation; (R)-lactate from methylglyoxal: step 2/2. Functionally, thiolesterase that catalyzes the hydrolysis of S-D-lactoyl-glutathione to form glutathione and D-lactic acid. This chain is Hydroxyacylglutathione hydrolase, found in Wigglesworthia glossinidia brevipalpis.